Here is a 295-residue protein sequence, read N- to C-terminus: Indole-3-glycerol phosphate synthase (295 aa).

The protein belongs to the TrpC family.

The enzyme catalyses 1-(2-carboxyphenylamino)-1-deoxy-D-ribulose 5-phosphate + H(+) = (1S,2R)-1-C-(indol-3-yl)glycerol 3-phosphate + CO2 + H2O. It functions in the pathway amino-acid biosynthesis; L-tryptophan biosynthesis; L-tryptophan from chorismate: step 4/5. The protein is Indole-3-glycerol phosphate synthase of Prochlorococcus marinus (strain MIT 9301).